A 79-amino-acid polypeptide reads, in one-letter code: Small ribosomal subunit protein bS18 (79 aa).

This sequence belongs to the bacterial ribosomal protein bS18 family. As to quaternary structure, part of the 30S ribosomal subunit. Forms a tight heterodimer with protein bS6.

Its function is as follows. Binds as a heterodimer with protein bS6 to the central domain of the 16S rRNA, where it helps stabilize the platform of the 30S subunit. This chain is Small ribosomal subunit protein bS18, found in Enterococcus faecalis (strain ATCC 700802 / V583).